Consider the following 476-residue polypeptide: Bridging integrator 2 (476 aa).

One can recognise a BAR domain in the interval V26–S242. Disordered stretches follow at residues Y269–A369 and G395–L476. Polar residues predominate over residues E279–R292. Residues P310–S324 show a composition bias toward pro residues. The segment covering P325–S339 has biased composition (low complexity). A compositionally biased stretch (basic and acidic residues) spans G340 to E353. Over residues V461–L476 the composition is skewed to polar residues.

It is found in the cytoplasm. In Gallus gallus (Chicken), this protein is Bridging integrator 2 (BIN2).